Consider the following 184-residue polypeptide: Signal peptidase complex subunit 3 (184 aa).

Topologically, residues 1–14 (MFSFVQRFQNVSNQ) are cytoplasmic. The chain crosses the membrane as a helical; Signal-anchor for type II membrane protein span at residues 15–35 (AFSMGIVMVVFIMASSYYQLI). At 36-184 (NNNAFSVPSN…TLTVENKNKV (149 aa)) the chain is on the lumenal side. N-linked (GlcNAc...) asparagine glycosylation is found at N102 and N173.

The protein belongs to the SPCS3 family. Component of the signal peptidase complex (SPC) composed of a catalytic subunit SEC11 and three accessory subunits SPC1, SPC2 and SPC3. The complex induces a local thinning of the ER membrane which is used to measure the length of the signal peptide (SP) h-region of protein substrates. This ensures the selectivity of the complex towards h-regions shorter than 18-20 amino acids. Interacts with SEC11. SPC associates with the translocon complex.

It is found in the endoplasmic reticulum membrane. Its function is as follows. Essential component of the signal peptidase complex (SPC) which catalyzes the cleavage of N-terminal signal sequences from nascent proteins as they are translocated into the lumen of the endoplasmic reticulum. Essential for the SPC catalytic activity, possibly by stabilizing and positioning the active center of the complex close to the lumenal surface. Essential for viability. This Saccharomyces cerevisiae (strain ATCC 204508 / S288c) (Baker's yeast) protein is Signal peptidase complex subunit 3 (SPC3).